The chain runs to 224 residues: UPF0758 protein VCM66_0205 (224 aa).

The tract at residues 1-20 (MSLKQLPTESMPREKLLQRG) is disordered. The 123-residue stretch at 102–224 (ALTSPQQTKL…VVSFAERGWI (123 aa)) folds into the MPN domain. Zn(2+) is bound by residues His-173, His-175, and Asp-186. A JAMM motif motif is present at residues 173 to 186 (HNHPSGVAEPSQAD).

This sequence belongs to the UPF0758 family.

This chain is UPF0758 protein VCM66_0205, found in Vibrio cholerae serotype O1 (strain M66-2).